Reading from the N-terminus, the 1022-residue chain is Leucine--tRNA ligase (1022 aa).

The 'HIGH' region motif lies at Pro47–His57. Positions Lys697–Ser701 match the 'KMSKS' region motif. Lys700 contacts ATP.

It belongs to the class-I aminoacyl-tRNA synthetase family.

It localises to the cytoplasm. It carries out the reaction tRNA(Leu) + L-leucine + ATP = L-leucyl-tRNA(Leu) + AMP + diphosphate. The sequence is that of Leucine--tRNA ligase from Ignicoccus hospitalis (strain KIN4/I / DSM 18386 / JCM 14125).